Reading from the N-terminus, the 473-residue chain is Dol-P-Glc:Glc(2)Man(9)GlcNAc(2)-PP-Dol alpha-1,2-glucosyltransferase (473 aa).

Residues 1 to 6 (MAQLEG) lie on the Cytoplasmic side of the membrane. Residues 7–27 (YCFSAALSCTFLVSCLLFSAF) traverse the membrane as a helical segment. Topologically, residues 28 to 64 (SRALREPYMDEIFHLPQAQRYCEGHFSLSQWDPMITT) are extracellular. Residues 65 to 85 (LPGLYLVSVGVVKPAIWIFAW) traverse the membrane as a helical segment. Over 86-97 (SEHVVCSIGMLR) the chain is Cytoplasmic. Residues 98 to 118 (FVNLLFSVGNFYLLYLLFHKV) traverse the membrane as a helical segment. Residues 119 to 126 (QPRNKAAS) lie on the Extracellular side of the membrane. The chain crosses the membrane as a helical span at residues 127-147 (SIQRVLSTLTLAVFPTLYFFN). Over 148–150 (FLY) the chain is Cytoplasmic. Residues 151-171 (YTEAGSMFFTLFAYLMCLYGN) traverse the membrane as a helical segment. Residues 172 to 175 (HKTS) lie on the Extracellular side of the membrane. Residues 176-196 (AFLGFCGFMFRQTNIIWAVFC) traverse the membrane as a helical segment. The Cytoplasmic segment spans residues 197–256 (AGNVIAQKLTEAWKTELQKKEDRLPPIKGPFAEFRKILQFLLAYSMSFKNLSMLFCLTWP). Residues 257–277 (YILLGFLFCAFVVVNGGIVIG) traverse the membrane as a helical segment. Over 278–283 (DRSSHE) the chain is Extracellular. Residues 284-304 (ACLHFPQLFYFFSFTLFFSFP) form a helical membrane-spanning segment. The Cytoplasmic portion of the chain corresponds to 305-317 (HLLSPSKIKTFLS). The helical transmembrane segment at 318-338 (LVWKHGILFLVVTLVSVFLVW) threads the bilayer. The Extracellular segment spans residues 339 to 365 (KFTYAHKYLLADNRHYTFYVWKRVFQR). A helical transmembrane segment spans residues 366–386 (YAILKYLLVPAYIFAGWSIAD). The Cytoplasmic portion of the chain corresponds to 387–392 (SLKSKP). Residues 393–413 (IFWNLMFFICLFIVIVPQKLL) traverse the membrane as a helical segment. Residues 414–436 (EFRYFILPYVIYRLNITLPPTSR) lie on the Extracellular side of the membrane. The chain crosses the membrane as a helical span at residues 437-457 (LVCELSCYAIVNFITFYIFLN). The Cytoplasmic portion of the chain corresponds to 458-473 (KTFQWPNSQDIQRFMW).

Belongs to the ALG10 glucosyltransferase family. As to quaternary structure, interacts with KCNH1; may regulate KCNH1, possibly by regulating its N-glycosylation. Interacts with KCNH2; may reduce KCNH2 sensitivity to classic proarrhythmic drug blockade, possibly by regulating its N-glycosylation. As to expression, highly expressed in heart, placenta, liver, kidney and pancreas. Weakly expressed in lung, skeletal muscle and brain.

The protein resides in the endoplasmic reticulum membrane. It catalyses the reaction an alpha-D-Glc-(1-&gt;3)-alpha-D-Glc-(1-&gt;3)-alpha-D-Man-(1-&gt;2)-alpha-D-Man-(1-&gt;2)-alpha-D-Man-(1-&gt;3)-[alpha-D-Man-(1-&gt;2)-alpha-D-Man-(1-&gt;3)-[alpha-D-Man-(1-&gt;2)-alpha-D-Man-(1-&gt;6)]-alpha-D-Man-(1-&gt;6)]-beta-D-Man-(1-&gt;4)-beta-D-GlcNAc-(1-&gt;4)-alpha-D-GlcNAc-diphospho-di-trans,poly-cis-dolichol + a di-trans,poly-cis-dolichyl beta-D-glucosyl phosphate = a alpha-D-Glc-(1-&gt;2)-alpha-D-Glc-(1-&gt;3)-alpha-D-Glc-(1-&gt;3)-alpha-D-Man-(1-&gt;2)-alpha-D-Man-(1-&gt;2)-alpha-D-Man-(1-&gt;3)-[alpha-D-Man-(1-&gt;2)-alpha-D-Man-(1-&gt;3)-[alpha-D-Man-(1-&gt;2)-alpha-D-Man-(1-&gt;6)]-alpha-D-Man-(1-&gt;6)]-beta-D-Man-(1-&gt;4)-beta-D-GlcNAc-(1-&gt;4)-alpha-D-GlcNAc-diphospho-di-trans,poly-cis-dolichol + a di-trans,poly-cis-dolichyl phosphate + H(+). The protein operates within protein modification; protein glycosylation. Functionally, dol-P-Glc:Glc(2)Man(9)GlcNAc(2)-PP-Dol alpha-1,2-glucosyltransferase that operates in the biosynthetic pathway of dolichol-linked oligosaccharides, the glycan precursors employed in protein asparagine (N)-glycosylation. The assembly of dolichol-linked oligosaccharides begins on the cytosolic side of the endoplasmic reticulum membrane and finishes in its lumen. The sequential addition of sugars to dolichol pyrophosphate produces dolichol-linked oligosaccharides containing fourteen sugars, including two GlcNAcs, nine mannoses and three glucoses. Once assembled, the oligosaccharide is transferred from the lipid to nascent proteins by oligosaccharyltransferases. In the lumen of the endoplasmic reticulum, adds the third and last glucose residue from dolichyl phosphate glucose (Dol-P-Glc) onto the lipid-linked oligosaccharide intermediate Glc(2)Man(9)GlcNAc(2)-PP-Dol to produce Glc(3)Man(9)GlcNAc(2)-PP-Dol. This is Dol-P-Glc:Glc(2)Man(9)GlcNAc(2)-PP-Dol alpha-1,2-glucosyltransferase from Homo sapiens (Human).